The sequence spans 156 residues: Ribonuclease pancreatic (156 aa).

Positions 1-28 (MALEKSLVLLPLLVLILLVLGWVQPSLG) are cleaved as a signal peptide. Substrate contacts are provided by Lys35 and Arg38. The active-site Proton acceptor is the His40. N-linked (GlcNAc...) asparagine glycans are attached at residues Asn50 and Asn62. 4 disulfide bridges follow: Cys54-Cys112, Cys68-Cys123, Cys86-Cys138, and Cys93-Cys100. Substrate-binding positions include 69-73 (KPVNT) and Lys94. Asn104 carries N-linked (GlcNAc...) asparagine glycosylation. Arg113 is a binding site for substrate. Catalysis depends on His147, which acts as the Proton donor.

It belongs to the pancreatic ribonuclease family. Monomer. Interacts with and forms tight 1:1 complexes with RNH1. Dimerization of two such complexes may occur. Interaction with RNH1 inhibits this protein. Pancreas and other tissues and body fluids (indicating it may have other physiological functions besides its role in digestion).

Its subcellular location is the secreted. It carries out the reaction an [RNA] containing cytidine + H2O = an [RNA]-3'-cytidine-3'-phosphate + a 5'-hydroxy-ribonucleotide-3'-[RNA].. The catalysed reaction is an [RNA] containing uridine + H2O = an [RNA]-3'-uridine-3'-phosphate + a 5'-hydroxy-ribonucleotide-3'-[RNA].. Functionally, endonuclease that catalyzes the cleavage of RNA on the 3' side of pyrimidine nucleotides. Acts on single-stranded and double-stranded RNA. This chain is Ribonuclease pancreatic (RNASE1), found in Pongo pygmaeus (Bornean orangutan).